The chain runs to 390 residues: Immunoglobulin mu Fc receptor (390 aa).

Residues M1–A16 form the signal peptide. The Extracellular segment spans residues L17–G251. In terms of domain architecture, Ig-like spans V23–H123. The segment at V33 to T115 is CDR4. 2 cysteine pairs are disulfide-bonded: C37-C104 and C49-C58. The interval P40–R45 is CDR1. The tract at residues G59–A70 is CDR2. T92 carries the phosphothreonine modification. The tract at residues A106–T115 is CDR3. The segment at P166–F204 is disordered. A helical transmembrane segment spans residues F252–V272. The Cytoplasmic portion of the chain corresponds to K273–A390. Composition is skewed to low complexity over residues M293–Q311 and A325–P334. Residues M293 to Q348 are disordered. Residues V335 to P346 are compositionally biased toward pro residues.

Interacts (via Ig-like domain) with IGHM (via CH4/Cmu4 domain), both secreted and membrane-bound IgM; the interaction is glycan-independent and multivalent theoretically involving up to eight binding sites for the IgM pentamer. In terms of processing, phosphorylated on both Tyr and Ser residues. O-glycosylated. Sialylated. O-linked glycans regulate trafficking to the plasma membrane. As to expression, expressed by CD19-positive B cells and CD4-positive and CD8-positive T cell populations in primary and secondary lymphoid tissues (at protein level). Among B cell subsets, detected in a subset of bone marrow pro- and pre-B cells, in most follicular and memory B cells and in a small subset of germinal center B cells (at protein level). Expressed at lower levels in CD56-positive NK cells (at protein level). Expressed in lymph nodes, lung, thymus and kidneys. Very weak expression detected in spleen, liver, heart, and salivary gland.

It is found in the cell membrane. The protein resides in the early endosome membrane. Its subcellular location is the golgi apparatus. The protein localises to the trans-Golgi network membrane. It localises to the lysosome membrane. It is found in the secreted. Functionally, high-affinity Fc receptor for immunoglobulin M (IgM), both secreted and membrane-bound IgM. Primarily regulates IgM transport and homeostasis. In lymphoid cells, enables exocytosis of membrane-bound IgM on the plasma membrane as well as endocytosis of IgM-antigen complexes toward lysosomes for degradation. In mucosal epithelium, mediates retrotranscytosis of antigen-IgM complexes across mucosal M cells toward antigen-presenting cells in mucosal lymphoid tissues. Triggers costimulatory signaling and mediates most of IgM effector functions involved in B cell development and primary immune response to infection. Likely limits tonic IgM BCR signaling to self-antigens for proper negative selection of autoreactive B cells in the bone marrow and for the maintenance of regulatory B cell pool in peripheral lymphoid organs. Mediates antibody responses to T cell-dependent and T cell-independent antigens and promotes induction of an efficient neutralizing IgG response. Engages in cross-talk with antigen-receptor signaling via the non-canonical NF-kappa-B, MAP kinases and calcium signaling pathways. This chain is Immunoglobulin mu Fc receptor, found in Homo sapiens (Human).